We begin with the raw amino-acid sequence, 95 residues long: MANSASAIKRIELNERNRLRNKTYKSMLKTYYKKCIVAIETTNNNDLETSNLRELVAITQSKIDKAVQKGIIHSNNGSAKKAKLTKRLKEKKISL.

A disordered region spans residues 76–95 (NGSAKKAKLTKRLKEKKISL). The span at 80–95 (KKAKLTKRLKEKKISL) shows a compositional bias: basic residues.

Belongs to the bacterial ribosomal protein bS20 family.

The protein resides in the plastid. It is found in the chloroplast. In terms of biological role, binds directly to 16S ribosomal RNA. The chain is Small ribosomal subunit protein bS20c from Guillardia theta (Cryptophyte).